The chain runs to 242 residues: Small ribosomal subunit protein uS2 (242 aa).

It belongs to the universal ribosomal protein uS2 family.

This Vibrio vulnificus (strain CMCP6) protein is Small ribosomal subunit protein uS2.